Reading from the N-terminus, the 129-residue chain is 4-amino-4-deoxychorismate mutase (129 aa).

Residues 16 to 107 (AAATDPLDAL…ETCRLEDEWI (92 aa)) enclose the Chorismate mutase domain.

The catalysed reaction is 4-amino-4-deoxychorismate = 4-amino-4-deoxyprephenate. It participates in antibiotic biosynthesis. Functionally, involved in pristinamycin I biosynthesis. Probably catalyzes the conversion of 4-amino-4-deoxychorismate to 4-amino-4-deoxyprephenate. The polypeptide is 4-amino-4-deoxychorismate mutase (Streptomyces pristinaespiralis).